Here is an 848-residue protein sequence, read N- to C-terminus: DNA mismatch repair protein MutS (848 aa).

G605–S612 is a binding site for ATP.

Belongs to the DNA mismatch repair MutS family.

In terms of biological role, this protein is involved in the repair of mismatches in DNA. It is possible that it carries out the mismatch recognition step. This protein has a weak ATPase activity. The protein is DNA mismatch repair protein MutS of Leptospira borgpetersenii serovar Hardjo-bovis (strain JB197).